The following is a 131-amino-acid chain: Ribosome-binding factor A (131 aa).

Belongs to the RbfA family. Monomer. Binds 30S ribosomal subunits, but not 50S ribosomal subunits or 70S ribosomes.

The protein resides in the cytoplasm. One of several proteins that assist in the late maturation steps of the functional core of the 30S ribosomal subunit. Associates with free 30S ribosomal subunits (but not with 30S subunits that are part of 70S ribosomes or polysomes). Required for efficient processing of 16S rRNA. May interact with the 5'-terminal helix region of 16S rRNA. The polypeptide is Ribosome-binding factor A (Ruegeria pomeroyi (strain ATCC 700808 / DSM 15171 / DSS-3) (Silicibacter pomeroyi)).